The following is a 332-amino-acid chain: Homoarginine-6-hydroxylase 2-ODD-C23.1 (332 aa).

Residues 182 to 287 form the Fe2OG dioxygenase domain; sequence PFWVMRLIGY…RVCVAFFYET (106 aa). 3 residues coordinate Fe cation: His210, Asp212, and His268. Arg278 contributes to the 2-oxoglutarate binding site.

The protein belongs to the iron/ascorbate-dependent oxidoreductase family. Fe(2+) serves as cofactor.

It is found in the cytoplasm. Its subcellular location is the cytosol. The catalysed reaction is L-homoarginine + 2-oxoglutarate + O2 = 6-hydroxy-L-homoarginine + succinate + CO2. Its activity is regulated as follows. Slightly inhibited by canavanine (Can), the 5-oxa-analog of arginine. Functionally, 2-oxoglutarate-dependent dioxygenase catalyzing homoarginine 6-hydroxylation thus producing 6-hydroxy-L-homoarginine. Guanidine (Gd) is in turn synthesized by the spontaneous conversion of 6-hydroxy-L-homoarginine to (S)-2-amino-6-oxohexanoate (RHEA:79843); guanidine is a nitrogen-rich compound that can serve as a defense or signaling substance. This is Homoarginine-6-hydroxylase 2-ODD-C23.1 from Arabidopsis thaliana (Mouse-ear cress).